The chain runs to 105 residues: MPCSCKQKKATPSDITTDRYITFDGIDCDGNARILMSYIHKHIDDPQKTNKFWDYFRKKAEGGNGPKPDDLFLIHSNLNQIRELFELYEDSEALALLDVVEIECC.

This sequence belongs to the CowN family.

Functionally, is required to sustain N(2)-dependent growth in the presence of low levels of carbon monoxide (CO). Probably acts by protecting the N(2) fixation ability of the nitrogenase complex, which is inactivated in the presence of CO. The sequence is that of N(2)-fixation sustaining protein CowN from Tolumonas auensis (strain DSM 9187 / NBRC 110442 / TA 4).